The primary structure comprises 239 residues: Lactate utilization protein A (239 aa).

Belongs to the LutA/YkgE family.

Is involved in L-lactate degradation and allows cells to grow with lactate as the sole carbon source. The sequence is that of Lactate utilization protein A from Bacillus cereus (strain G9842).